Here is a 309-residue protein sequence, read N- to C-terminus: Putative taste receptor type 2 member 36 (309 aa).

Residue Met1 is a topological domain, extracellular. The helical transmembrane segment at 2-22 threads the bilayer; the sequence is ICFLLIILSILVVFAFVLGNF. Residues 23-46 are Cytoplasmic-facing; it reads SNGFIALVNVIDWVKRQKISSADQ. The helical transmembrane segment at 47–67 threads the bilayer; sequence ILTALVVSRVGLLWVILLHWY. The Extracellular segment spans residues 68-79; that stretch reads SNVLNSALYSSE. The helical transmembrane segment at 80-100 threads the bilayer; that stretch reads VIIFISNAWAIINHFSIWLAT. Topologically, residues 101-126 are cytoplasmic; the sequence is SLSIFYLLKIVNFSRLIFHHLKRKAK. A helical transmembrane segment spans residues 127–147; the sequence is SVVLVIVLGPLVFLVCHLVMK. The Extracellular portion of the chain corresponds to 148–181; sequence HTYINVWTKEYEGNVTWKIKLRNAIHLSNLTVST. 2 N-linked (GlcNAc...) asparagine glycosylation sites follow: Asn161 and Asn176. Residues 182–202 traverse the membrane as a helical segment; the sequence is LANLIPFTLTLISFLLLIYSL. Residues 203 to 229 are Cytoplasmic-facing; that stretch reads CKHLKKMQLHGKGSQDPSTKVHIKALQ. Residues 230–250 form a helical membrane-spanning segment; the sequence is TVTSFLLLCAIYFLSMIISVC. The Extracellular segment spans residues 251–259; sequence NFGRLEKQP. Residues 260-280 traverse the membrane as a helical segment; the sequence is VFMFCQAIIFSYPSTHPFILI. Over 281–309 the chain is Cytoplasmic; it reads LGNKKLKQIFLSVFWQMRYWVKGEKPSSP.

Belongs to the G-protein coupled receptor T2R family.

The protein localises to the membrane. Functionally, putative taste receptor which may play a role in the perception of bitterness. The protein is Putative taste receptor type 2 member 36 of Homo sapiens (Human).